A 135-amino-acid chain; its full sequence is ATP synthase epsilon chain (135 aa).

The protein belongs to the ATPase epsilon chain family. As to quaternary structure, F-type ATPases have 2 components, CF(1) - the catalytic core - and CF(0) - the membrane proton channel. CF(1) has five subunits: alpha(3), beta(3), gamma(1), delta(1), epsilon(1). CF(0) has three main subunits: a, b and c.

It localises to the cellular thylakoid membrane. Produces ATP from ADP in the presence of a proton gradient across the membrane. The protein is ATP synthase epsilon chain of Prochlorococcus marinus (strain MIT 9211).